The following is a 383-amino-acid chain: 3-dehydroquinate synthase (383 aa).

Residues 81-86 (EGEVSK), 115-119 (GVVGD), 139-140 (TS), Lys152, and Lys161 each bind NAD(+). Positions 194, 256, and 274 each coordinate Zn(2+).

The protein belongs to the sugar phosphate cyclases superfamily. Dehydroquinate synthase family. Co(2+) serves as cofactor. It depends on Zn(2+) as a cofactor. The cofactor is NAD(+).

The protein resides in the cytoplasm. It catalyses the reaction 7-phospho-2-dehydro-3-deoxy-D-arabino-heptonate = 3-dehydroquinate + phosphate. It participates in metabolic intermediate biosynthesis; chorismate biosynthesis; chorismate from D-erythrose 4-phosphate and phosphoenolpyruvate: step 2/7. Catalyzes the conversion of 3-deoxy-D-arabino-heptulosonate 7-phosphate (DAHP) to dehydroquinate (DHQ). This chain is 3-dehydroquinate synthase, found in Nitrobacter winogradskyi (strain ATCC 25391 / DSM 10237 / CIP 104748 / NCIMB 11846 / Nb-255).